The sequence spans 319 residues: ATP-dependent 6-phosphofructokinase (319 aa).

Gly11 is a binding site for ATP. 21–25 (RAVVR) serves as a coordination point for ADP. Residues 72 to 73 (RS) and 102 to 105 (GDGS) each bind ATP. Position 103 (Asp103) interacts with Mg(2+). Residue 125–127 (TID) coordinates substrate. Catalysis depends on Asp127, which acts as the Proton acceptor. Position 154 (Arg154) interacts with ADP. Substrate contacts are provided by residues Arg162 and 169 to 171 (MGR). ADP-binding positions include 185–187 (GAE), Arg211, and 213–215 (KKH). Substrate-binding positions include Glu222, Arg243, and 249–252 (HVQR).

It belongs to the phosphofructokinase type A (PFKA) family. ATP-dependent PFK group I subfamily. Prokaryotic clade 'B1' sub-subfamily. As to quaternary structure, homotetramer. The cofactor is Mg(2+).

It localises to the cytoplasm. The enzyme catalyses beta-D-fructose 6-phosphate + ATP = beta-D-fructose 1,6-bisphosphate + ADP + H(+). It functions in the pathway carbohydrate degradation; glycolysis; D-glyceraldehyde 3-phosphate and glycerone phosphate from D-glucose: step 3/4. Its activity is regulated as follows. Allosterically activated by ADP and other diphosphonucleosides, and allosterically inhibited by phosphoenolpyruvate. Catalyzes the phosphorylation of D-fructose 6-phosphate to fructose 1,6-bisphosphate by ATP, the first committing step of glycolysis. This chain is ATP-dependent 6-phosphofructokinase, found in Natranaerobius thermophilus (strain ATCC BAA-1301 / DSM 18059 / JW/NM-WN-LF).